Here is a 317-residue protein sequence, read N- to C-terminus: MPREDRATWKSNYFLKIIQLLNDYPKCFIVGADNVGSKQMQTIRLSLRGKAIVLMGKNTMMRKAIRGHLENNPALEKLLPHIRGNVGFVFTKEDLPEVRDMLLANKVPAAARAGAIAPCEVTVPAQNTGLGPEKTSFFQALGITTKISRGTIEILSDVQLIRPGDKVGASEATLLNMLNISPFSYGLIIQQVYDNGSVYSPEVLDITEDALHKRFLEGVRNIASVCLQIGYPTLASIPHSIINGYKRVLRVAVETDYSFPMADKVKAFLADPSRFAVAAAPSVAAAPAAVRLVPLLSRPRRSPRSLMRTWLRPVRLK.

Belongs to the universal ribosomal protein uL10 family. As to quaternary structure, P0 forms a pentameric complex by interaction with dimers of P1 and P2. Post-translationally, phosphorylated.

In terms of biological role, ribosomal protein P0 is the functional equivalent of E.coli protein L10. This Ictalurus punctatus (Channel catfish) protein is Large ribosomal subunit protein uL10 (rplp0).